The following is a 412-amino-acid chain: Lipoyl synthase, mitochondrial (412 aa).

Residues cysteine 127, cysteine 132, cysteine 138, cysteine 159, cysteine 163, cysteine 166, and serine 375 each contribute to the [4Fe-4S] cluster site. In terms of domain architecture, Radical SAM core spans 142 to 364 (SDDEGTATAT…EKEAMDMGFL (223 aa)).

Belongs to the radical SAM superfamily. Lipoyl synthase family. [4Fe-4S] cluster serves as cofactor.

The protein resides in the mitochondrion. The enzyme catalyses [[Fe-S] cluster scaffold protein carrying a second [4Fe-4S](2+) cluster] + N(6)-octanoyl-L-lysyl-[protein] + 2 oxidized [2Fe-2S]-[ferredoxin] + 2 S-adenosyl-L-methionine + 4 H(+) = [[Fe-S] cluster scaffold protein] + N(6)-[(R)-dihydrolipoyl]-L-lysyl-[protein] + 4 Fe(3+) + 2 hydrogen sulfide + 2 5'-deoxyadenosine + 2 L-methionine + 2 reduced [2Fe-2S]-[ferredoxin]. Its pathway is protein modification; protein lipoylation via endogenous pathway; protein N(6)-(lipoyl)lysine from octanoyl-[acyl-carrier-protein]: step 2/2. Functionally, catalyzes the radical-mediated insertion of two sulfur atoms into the C-6 and C-8 positions of the octanoyl moiety bound to the lipoyl domains of lipoate-dependent enzymes, thereby converting the octanoylated domains into lipoylated derivatives. The protein is Lipoyl synthase, mitochondrial of Leishmania infantum.